A 249-amino-acid polypeptide reads, in one-letter code: Probable transcriptional regulatory protein mll3945 (249 aa).

Belongs to the TACO1 family.

Its subcellular location is the cytoplasm. The sequence is that of Probable transcriptional regulatory protein mll3945 from Mesorhizobium japonicum (strain LMG 29417 / CECT 9101 / MAFF 303099) (Mesorhizobium loti (strain MAFF 303099)).